The sequence spans 375 residues: MDAFVVALTSVIQDSGFVAFTWGNAVMMLVGCILLYLAIVKGFEPLLLSPIAFGCILANVPRTGFETDPGVMQLILGGIKYEIFPPLIFMGVGAMTDFGPLIANPKTLLLGAAAQIGVFVALLGAMLLGFNVKEASAIGIIGGADGPTSIYLASKMAPHLLGAIAVAAYSYMSLVPLIQPPVMKLFTSKEERKIKMAQLRTVTHFEKVVFPIVTTIFISLLLPSVCSLIGMLMLGNLFTESGCMDRLSDTAQNALMNSVTIMLATGTGLTMKAESFLTLQTIEIICLGLVAFIGGTAGGVLFGKLMSKLDGGKTNPLIGSAGVSAVPMAARVSQVVGQQADPGNFLLMHAMGPNVAGVIGTAVAAGTMLAMVGGK.

Helical transmembrane passes span 16 to 39 (GFVA…YLAI), 46 to 65 (LLLS…RTGF), 74 to 96 (LILG…GAMT), 107 to 130 (TLLL…LLGF), 137 to 153 (AIGI…IYLA), 160 to 178 (LLGA…VPLI), 208 to 232 (VVFP…IGML), 254 to 271 (ALMN…GLTM), 284 to 302 (IICL…GVLF), 316 to 332 (PLIG…AARV), and 345 to 369 (FLLM…GTML).

Belongs to the GcdB/MmdB/OadB family. Heterooctamer consisting of two alpha, two beta, two gamma and two delta subunits. In terms of processing, the N-terminus is blocked.

It localises to the cell membrane. The enzyme catalyses (2E)-glutaconyl-CoA + Na(+)(in) + H(+) = (2E)-butenoyl-CoA + Na(+)(out) + CO2. The protein operates within amino-acid degradation; L-glutamate degradation via hydroxyglutarate pathway; crotonoyl-CoA from L-glutamate: step 5/5. Functionally, tunnel subunit of the primary sodium pump glutaconyl-CoA decarboxylase (GCD). The polypeptide is Glutaconyl-CoA decarboxylase subunit beta (gcdB) (Acidaminococcus fermentans (strain ATCC 25085 / DSM 20731 / CCUG 9996 / CIP 106432 / VR4)).